The primary structure comprises 258 residues: Snake venom serine protease (258 aa).

The signal sequence occupies residues Met1–Ala18. Residues Gln19–Leu24 constitute a propeptide that is removed on maturation. The Peptidase S1 domain occupies Val25–Ala249. 6 disulfides stabilise this stretch: Cys31-Cys163, Cys50-Cys66, Cys98-Cys256, Cys142-Cys210, Cys174-Cys189, and Cys200-Cys225. Residues His65 and Asp110 each act as charge relay system in the active site. Asn154 carries an N-linked (GlcNAc...) asparagine glycan. The active-site Charge relay system is Ser204.

This sequence belongs to the peptidase S1 family. Snake venom subfamily. Monomer. As to expression, expressed by the venom gland.

It localises to the secreted. Snake venom serine protease that may act in the hemostasis system of the prey. In Lachesis stenophrys (Central American bushmaster), this protein is Snake venom serine protease.